The chain runs to 156 residues: Small ribosomal subunit protein uS7 (156 aa).

The protein belongs to the universal ribosomal protein uS7 family. Part of the 30S ribosomal subunit. Contacts proteins S9 and S11.

Its function is as follows. One of the primary rRNA binding proteins, it binds directly to 16S rRNA where it nucleates assembly of the head domain of the 30S subunit. Is located at the subunit interface close to the decoding center, probably blocks exit of the E-site tRNA. This is Small ribosomal subunit protein uS7 from Mycolicibacterium vanbaalenii (strain DSM 7251 / JCM 13017 / BCRC 16820 / KCTC 9966 / NRRL B-24157 / PYR-1) (Mycobacterium vanbaalenii).